A 596-amino-acid polypeptide reads, in one-letter code: Transcription factor EGL1 (596 aa).

The bHLH domain maps to 401 to 450 (EETGNHALSEKKRREKLNERFMTLRSIIPSISKIDKVSILDDTIEYLQDL).

As to quaternary structure, efficient DNA binding requires dimerization with another bHLH protein. Homodimer and heterodimer with GL3. Interacts with CPC, MYB0/GL1, MYB5, MYB23, MYB113, MYB114, MYB75/PAP1, MYB90/PAP2, TT2, TRY, TTG1 and MYB66/WER. Ubiquitous with higher levels in buds and flowers. Specifically localized in developing root hair cells. Expressed in epidermal root hair cells (trichoblasts) and moves to root hairless cells (atrichoblasts) by a cell-to-cell movement through plasmodesmata (at protein level).

The protein resides in the nucleus. In terms of biological role, transcription activator, when associated with MYB75/PAP1, MYB90/PAP2 or TT2. Involved in epidermal cell fate specification. Negatively regulates stomata formation but promotes trichome formation. Together with MYB66/WER, promotes the formation of non-hair cells in root epidermis cells in the N position. Whereas together with CPC, promotes the formation of hair cells in root epidermis cells in the H position by inhibiting non-hair cell formation. Also seems to play a role in the activation of anthocyanin biosynthesis, probably together with MYB75/PAP1. Involved in seed mucilage production. Activates the transcription of GL2. This chain is Transcription factor EGL1 (BHLH2), found in Arabidopsis thaliana (Mouse-ear cress).